A 148-amino-acid chain; its full sequence is UPF0756 membrane protein YeaL (148 aa).

Transmembrane regions (helical) follow at residues 14-34 (ALGFISHNTTVAVSILVLIIV), 51-71 (LTVGIIILTIGVMAPIASGTL), 86-106 (LVAIAVGVFVSWLGGRGITLM), and 121-141 (VLGVALFRGVPVGPLIAAGLV).

It belongs to the UPF0756 family.

Its subcellular location is the cell membrane. The chain is UPF0756 membrane protein YeaL from Salmonella choleraesuis (strain SC-B67).